A 942-amino-acid polypeptide reads, in one-letter code: DNA mismatch repair protein MSH2 (942 aa).

667–674 (GPNMGGKS) contacts ATP.

The protein belongs to the DNA mismatch repair MutS family. As to quaternary structure, heterodimer of MSH2 and MSH6 (GTBP).

The protein resides in the nucleus. Functionally, involved in postreplication mismatch repair. Binds specifically to DNA containing mismatched nucleotides thus providing a target for the excision repair processes characteristic of postreplication mismatch repair. This Zea mays (Maize) protein is DNA mismatch repair protein MSH2 (MUS1).